The sequence spans 150 residues: Endoribonuclease YbeY (150 aa).

Positions 102, 106, and 112 each coordinate Zn(2+).

The protein belongs to the endoribonuclease YbeY family. Zn(2+) is required as a cofactor.

It is found in the cytoplasm. Its function is as follows. Single strand-specific metallo-endoribonuclease involved in late-stage 70S ribosome quality control and in maturation of the 3' terminus of the 16S rRNA. The sequence is that of Endoribonuclease YbeY from Thermotoga petrophila (strain ATCC BAA-488 / DSM 13995 / JCM 10881 / RKU-1).